The sequence spans 144 residues: 6-pyruvoyl tetrahydrobiopterin synthase (144 aa).

The propeptide occupies 1 to 4 (MNAA). Position 18 is a phosphoserine (S18). H23 contacts Zn(2+). S27 is subject to Phosphoserine. The Proton acceptor role is filled by C42. Positions 48 and 50 each coordinate Zn(2+). The active-site Charge relay system is the H89. Y127 bears the Phosphotyrosine mark. Residue E133 is the Charge relay system of the active site.

The protein belongs to the PTPS family. In terms of assembly, homohexamer formed of two homotrimers in a head to head fashion. Requires Zn(2+) as cofactor. Post-translationally, phosphorylation of Ser-18 is required for maximal enzyme activity.

It catalyses the reaction 7,8-dihydroneopterin 3'-triphosphate = 6-pyruvoyl-5,6,7,8-tetrahydropterin + triphosphate + H(+). Its pathway is cofactor biosynthesis; tetrahydrobiopterin biosynthesis; tetrahydrobiopterin from 7,8-dihydroneopterin triphosphate: step 1/3. In terms of biological role, involved in the biosynthesis of tetrahydrobiopterin, an essential cofactor of aromatic amino acid hydroxylases. Catalyzes the transformation of 7,8-dihydroneopterin triphosphate into 6-pyruvoyl tetrahydropterin. The sequence is that of 6-pyruvoyl tetrahydrobiopterin synthase (Pts) from Rattus norvegicus (Rat).